Consider the following 969-residue polypeptide: RNA polymerase-associated protein RapA (969 aa).

The Helicase ATP-binding domain occupies 162 to 339 (EVGQRVAPRV…FARLALLDAD (178 aa)). 175–182 (DEVGLGKT) is an ATP binding site. The DEAH box motif lies at 285 to 288 (DEAH). The Helicase C-terminal domain maps to 492–663 (RIEWLITFLK…GFLKNPQAVG (172 aa)).

Belongs to the SNF2/RAD54 helicase family. RapA subfamily. As to quaternary structure, interacts with the RNAP. Has a higher affinity for the core RNAP than for the holoenzyme. Its ATPase activity is stimulated by binding to RNAP.

Transcription regulator that activates transcription by stimulating RNA polymerase (RNAP) recycling in case of stress conditions such as supercoiled DNA or high salt concentrations. Probably acts by releasing the RNAP, when it is trapped or immobilized on tightly supercoiled DNA. Does not activate transcription on linear DNA. Probably not involved in DNA repair. The sequence is that of RNA polymerase-associated protein RapA from Actinobacillus pleuropneumoniae serotype 5b (strain L20).